The primary structure comprises 77 residues: Exodeoxyribonuclease 7 small subunit (77 aa).

Belongs to the XseB family. In terms of assembly, heterooligomer composed of large and small subunits.

It localises to the cytoplasm. It catalyses the reaction Exonucleolytic cleavage in either 5'- to 3'- or 3'- to 5'-direction to yield nucleoside 5'-phosphates.. In terms of biological role, bidirectionally degrades single-stranded DNA into large acid-insoluble oligonucleotides, which are then degraded further into small acid-soluble oligonucleotides. The protein is Exodeoxyribonuclease 7 small subunit of Alkaliphilus oremlandii (strain OhILAs) (Clostridium oremlandii (strain OhILAs)).